We begin with the raw amino-acid sequence, 540 residues long: Hydroxylamine reductase (540 aa).

[4Fe-4S] cluster-binding residues include cysteine 3, cysteine 6, cysteine 15, and cysteine 21. Hybrid [4Fe-2O-2S] cluster is bound by residues histidine 236, glutamate 260, cysteine 304, cysteine 395, cysteine 423, cysteine 448, glutamate 483, and lysine 485. Cysteine 395 carries the cysteine persulfide modification.

The protein belongs to the HCP family. It depends on [4Fe-4S] cluster as a cofactor. Requires hybrid [4Fe-2O-2S] cluster as cofactor.

Its subcellular location is the cytoplasm. It carries out the reaction A + NH4(+) + H2O = hydroxylamine + AH2 + H(+). Its function is as follows. Catalyzes the reduction of hydroxylamine to form NH(3) and H(2)O. The sequence is that of Hydroxylamine reductase from Methanosarcina mazei (strain ATCC BAA-159 / DSM 3647 / Goe1 / Go1 / JCM 11833 / OCM 88) (Methanosarcina frisia).